The sequence spans 297 residues: Elongation factor Ts (297 aa).

An involved in Mg(2+) ion dislocation from EF-Tu region spans residues 82-85 (TDFV).

Belongs to the EF-Ts family.

It localises to the cytoplasm. Associates with the EF-Tu.GDP complex and induces the exchange of GDP to GTP. It remains bound to the aminoacyl-tRNA.EF-Tu.GTP complex up to the GTP hydrolysis stage on the ribosome. This is Elongation factor Ts from Azoarcus sp. (strain BH72).